We begin with the raw amino-acid sequence, 130 residues long: Small ribosomal subunit protein uS11c (130 aa).

It belongs to the universal ribosomal protein uS11 family. In terms of assembly, part of the 30S ribosomal subunit.

Its subcellular location is the plastid. The protein resides in the chloroplast. The sequence is that of Small ribosomal subunit protein uS11c from Marchantia polymorpha (Common liverwort).